The chain runs to 176 residues: Cytochrome b (176 aa).

The next 3 membrane-spanning stretches (helical) occupy residues 33 to 53, 77 to 98, and 113 to 133; these read FGSLLGICLVLQISTGLFLAM, WVLRYLHANGASMFFICLYLHV, and WNVGVILLFATMATAFMGYVL. Heme b is bound by residues H83 and H97.

The protein belongs to the cytochrome b family. In terms of assembly, the cytochrome bc1 complex contains 11 subunits: 3 respiratory subunits (MT-CYB, CYC1 and UQCRFS1), 2 core proteins (UQCRC1 and UQCRC2) and 6 low-molecular weight proteins (UQCRH/QCR6, UQCRB/QCR7, UQCRQ/QCR8, UQCR10/QCR9, UQCR11/QCR10 and a cleavage product of UQCRFS1). This cytochrome bc1 complex then forms a dimer. Heme b is required as a cofactor.

It localises to the mitochondrion inner membrane. In terms of biological role, component of the ubiquinol-cytochrome c reductase complex (complex III or cytochrome b-c1 complex) that is part of the mitochondrial respiratory chain. The b-c1 complex mediates electron transfer from ubiquinol to cytochrome c. Contributes to the generation of a proton gradient across the mitochondrial membrane that is then used for ATP synthesis. The sequence is that of Cytochrome b (MT-CYB) from Corynorhinus rafinesquii (Rafinesque's big-eared bat).